A 634-amino-acid polypeptide reads, in one-letter code: Acetylcholinesterase (634 aa).

Residues 1–23 (MKTSDILLLPTVLLTFLFHNCFA) form the signal peptide. Cysteine 91 and cysteine 118 are disulfide-bonded. Asparagine 133 and asparagine 184 each carry an N-linked (GlcNAc...) asparagine glycan. Serine 225 functions as the Acyl-ester intermediate in the catalytic mechanism. Cysteine 279 and cysteine 290 are disulfide-bonded. N-linked (GlcNAc...) asparagine glycosylation is present at asparagine 283. Catalysis depends on glutamate 352, which acts as the Charge relay system. Asparagine 368 is a glycosylation site (N-linked (GlcNAc...) asparagine). Cysteine 427 and cysteine 580 are oxidised to a cystine. The active-site Charge relay system is the histidine 495. N-linked (GlcNAc...) asparagine glycosylation is found at asparagine 512 and asparagine 592.

The protein belongs to the type-B carboxylesterase/lipase family. Dimers and collagen-tailed forms, in which catalytic tetramers are associated with anchoring proteins that attach them to the basal lamina or to cell membranes. In the collagen-tailed forms, subunits are associated with a specific collagen, COLQ, which triggers the formation of isoform T tetramers from dimers.

It localises to the synapse. Its subcellular location is the secreted. It is found in the cell membrane. It catalyses the reaction acetylcholine + H2O = choline + acetate + H(+). Terminates signal transduction at the neuromuscular junction by rapid hydrolysis of the acetylcholine released into the synaptic cleft. The polypeptide is Acetylcholinesterase (ache) (Danio rerio (Zebrafish)).